The sequence spans 781 residues: Poly(ADP-ribose) glycohydrolase 1 (781 aa).

Disordered stretches follow at residues 28 to 87 (AHQV…VSEN), 102 to 131 (SLDNVTERSEHTLDNHKSTEPMEEDVNNKS), and 206 to 232 (ADSTFVGEDSKNQRQSGTTSDEVDADS). The segment covering 106 to 121 (VTERSEHTLDNHKSTE) has biased composition (basic and acidic residues).

It belongs to the poly(ADP-ribose) glycohydrolase family. Expressed in head and tail neurons. Also detected in the central nerve cord and motor neurons.

The protein localises to the nucleus. The enzyme catalyses [(1''-&gt;2')-ADP-alpha-D-ribose](n) + H2O = [(1''-&gt;2')-ADP-alpha-D-ribose](n-1) + ADP-D-ribose. Its function is as follows. Poly(ADP-ribose) synthesized after DNA damage is only present transiently and is rapidly degraded by poly(ADP-ribose) glycohydrolase. Poly(ADP-ribose) metabolism may be required for maintenance of the normal function of neuronal cells. The protein is Poly(ADP-ribose) glycohydrolase 1 of Caenorhabditis elegans.